Consider the following 316-residue polypeptide: Olfactory receptor 2H1 (316 aa).

Topologically, residues 1–23 (MVNQSSPMGFLLLGFSEHPALER) are extracellular. The N-linked (GlcNAc...) asparagine glycan is linked to N3. Residues 24–47 (TLFVVVFTSYLLTLVGNTLIILLS) traverse the membrane as a helical segment. At 48 to 55 (VLYPRLHS) the chain is on the cytoplasmic side. A helical transmembrane segment spans residues 56 to 77 (PMYFFLSDLSFLDLCFTTSCVP). Over 78–98 (QMLVNLWGPKKTISFLGCSVQ) the chain is Extracellular. A disulfide bridge links C95 with C187. A helical membrane pass occupies residues 99 to 118 (LFIFLSLGTTECILLTVMAF). The Cytoplasmic portion of the chain corresponds to 119 to 137 (DRYVAVCQPLHYATIIHPR). A helical membrane pass occupies residues 138–156 (LCWQLASVAWVMSLVQSIV). At 157–193 (QTPSTLHLPFCPHQQIDDFLCEVPSLIRLSCGDTSYN) the chain is on the extracellular side. The chain crosses the membrane as a helical span at residues 194–217 (EIQLAVSSVIFVVVPLSLILASYG). Residues 218 to 234 (ATAQAVLRINSATAWRK) are Cytoplasmic-facing. The chain crosses the membrane as a helical span at residues 235 to 257 (AFGTCSSHLTVVTLFYSSVIAVY). The Extracellular portion of the chain corresponds to 258–270 (LQPKNPYAQGRGK). Residues 271-290 (FFGLFYAVGTPSLNPLVYTL) traverse the membrane as a helical segment. Over 291-316 (RNKEIKRALRRLLGKERDSRESWRAA) the chain is Cytoplasmic.

This sequence belongs to the G-protein coupled receptor 1 family.

It is found in the cell membrane. Its function is as follows. Odorant receptor. The polypeptide is Olfactory receptor 2H1 (OR2H1) (Homo sapiens (Human)).